The sequence spans 236 residues: Sperm flagellar protein 1 (236 aa).

The 106-residue stretch at 7 to 112 folds into the Calponin-homology (CH) domain; it reads EEALHQLYLW…VLIPLRQRLE (106 aa). The disordered stretch occupies residues 115–176; sequence QRRRKQGAGS…PRPPAYNRAL (62 aa). Positions 183-236 are essential for homodimerization and microtubule bundling activity; that stretch reads VLQIAEKEQELLASQETVQVLQMKVRRLEHLLQLKNVRIEDLSRRLQQAERKQR.

Homodimer. Interacts with actin, TJP1, CGN and CDH1. As to expression, expressed in the intestinal epithelial cells (at protein level).

It is found in the cytoplasm. It localises to the cell projection. The protein localises to the cilium. The protein resides in the flagellum. Its subcellular location is the cytoskeleton. It is found in the cilium axoneme. It localises to the apical cell membrane. The protein localises to the basolateral cell membrane. The protein resides in the stress fiber. Its subcellular location is the microvillus. It is found in the lamellipodium. It localises to the filopodium. In terms of biological role, microtubule-associated protein involved in the stabilization of microtubules along the axis of migration during radial intercalation. Promotes the establishment and stabilization of an axis of microtubules required for the active migration of cells into the outer epithelium. Microtubule-associated protein that promotes microtubule bundling and stabilizes microtubules against depolymerization in response to cold shock. Essential for ciliary central apparatus formation which requires both its microtubule-binding and bundling activities and for ciliary localization of HYDIN and SPAG6 in ependymal cilia. Binds actin in intestinal epithelial cells (IECs), essential for IECs survival and contributes to formation of filopodia and lamellipodia in migrating IECs. Regulates planar cell polarity signaling pathway and asymmetric microtubule accumulation in ciliated epithelia. The polypeptide is Sperm flagellar protein 1 (SPEF1) (Homo sapiens (Human)).